Consider the following 396-residue polypeptide: Elongation factor Tu (396 aa).

The tr-type G domain occupies Lys-11–Glu-205. Positions Gly-20–Thr-27 are G1. Residue Gly-20–Thr-27 coordinates GTP. Thr-27 is a Mg(2+) binding site. The segment at Gly-61–Asn-65 is G2. The tract at residues Asp-82 to Gly-85 is G3. GTP contacts are provided by residues Asp-82 to His-86 and Asn-137 to Asp-140. A G4 region spans residues Asn-137–Asp-140. Residues Ser-175 to Leu-177 form a G5 region.

The protein belongs to the TRAFAC class translation factor GTPase superfamily. Classic translation factor GTPase family. EF-Tu/EF-1A subfamily. Monomer.

The protein localises to the cytoplasm. The enzyme catalyses GTP + H2O = GDP + phosphate + H(+). GTP hydrolase that promotes the GTP-dependent binding of aminoacyl-tRNA to the A-site of ribosomes during protein biosynthesis. The protein is Elongation factor Tu of Lactobacillus delbrueckii subsp. bulgaricus (strain ATCC 11842 / DSM 20081 / BCRC 10696 / JCM 1002 / NBRC 13953 / NCIMB 11778 / NCTC 12712 / WDCM 00102 / Lb 14).